We begin with the raw amino-acid sequence, 160 residues long: SsrA-binding protein (160 aa).

It belongs to the SmpB family.

The protein localises to the cytoplasm. Functionally, required for rescue of stalled ribosomes mediated by trans-translation. Binds to transfer-messenger RNA (tmRNA), required for stable association of tmRNA with ribosomes. tmRNA and SmpB together mimic tRNA shape, replacing the anticodon stem-loop with SmpB. tmRNA is encoded by the ssrA gene; the 2 termini fold to resemble tRNA(Ala) and it encodes a 'tag peptide', a short internal open reading frame. During trans-translation Ala-aminoacylated tmRNA acts like a tRNA, entering the A-site of stalled ribosomes, displacing the stalled mRNA. The ribosome then switches to translate the ORF on the tmRNA; the nascent peptide is terminated with the 'tag peptide' encoded by the tmRNA and targeted for degradation. The ribosome is freed to recommence translation, which seems to be the essential function of trans-translation. The sequence is that of SsrA-binding protein from Rhodospirillum rubrum (strain ATCC 11170 / ATH 1.1.1 / DSM 467 / LMG 4362 / NCIMB 8255 / S1).